Here is a 244-residue protein sequence, read N- to C-terminus: MFSLKMRASRNGKHVSGAERLVTEEKIEEISSELIKRAMGHENGVPDFINLKIEKVTEKINNLKHLEIKTVHSTSKETSRVIARNLLKNELEKYYLKNGKDIEKIDELIDFAFKIIDEGNMRGAAILDLDGNRLETDSNRGIRVKNIDTTDELSEKILGNSSLSERTVDAIAIATKVVNCGVISELCTSDNFSYTTGYIATKDGYFRILNLKGNGEVGGRVFFVENSKIDELYDKLENMPVIVY.

It belongs to the BioW family. Homodimer. The cofactor is Mg(2+).

The catalysed reaction is heptanedioate + ATP + CoA = 6-carboxyhexanoyl-CoA + AMP + diphosphate. It functions in the pathway metabolic intermediate metabolism; pimeloyl-CoA biosynthesis; pimeloyl-CoA from pimelate: step 1/1. In terms of biological role, catalyzes the transformation of pimelate into pimeloyl-CoA with concomitant hydrolysis of ATP to AMP. The chain is 6-carboxyhexanoate--CoA ligase from Methanococcus maripaludis (strain C7 / ATCC BAA-1331).